We begin with the raw amino-acid sequence, 104 residues long: MQKIRRDDEIIVIAGKDKGKRGKVLKVLADDRLVIGGVNLVKRHTKPNPMAGVQGGIVEKEAPLHASNVAIFNGETNKADRVGFKVEDGKKIRVFKSTQKAVDA.

The protein belongs to the universal ribosomal protein uL24 family. As to quaternary structure, part of the 50S ribosomal subunit.

Functionally, one of two assembly initiator proteins, it binds directly to the 5'-end of the 23S rRNA, where it nucleates assembly of the 50S subunit. One of the proteins that surrounds the polypeptide exit tunnel on the outside of the subunit. This chain is Large ribosomal subunit protein uL24, found in Pseudomonas entomophila (strain L48).